The primary structure comprises 400 residues: MTHEAVDTTPLHGTGWSFRSAMYDPKYRSIFYQILTIVILVGFVWWVAHNTAVNLARSNTASGFGFLRGRAGFEIGQSLITFSSDSTYARALLVGILNTLLVAVTGIFTATIIGFLIGIGRLSRNWLIAKLCTVYVEVFRNIPPLLVIFFWYLGVLSVLPQPRESVGLPFSMYLNNRGLAFPKPIFDTGMIAVGIALVIAIVASIIIARWAHKRQAATGQPFHTVWTAIALIVGLPLLVFVVSGFPLTFDVPVAGKFNLTGGSVVGPEFMSLFLALSFYTASFIAEIVRGGIRGVPKGQSEAAGALGLHPSSVTRLVVVPQALRIIIPPLTSQYLNLTKNSSLAIAIGFSDLVAVGGTILNQSGQAIEIVCIWGIVYLSLSILTSLFMNWFNAKMALVER.

A run of 8 helical transmembrane segments spans residues 29–49 (SIFYQILTIVILVGFVWWVAH), 100–120 (LLVAVTGIFTATIIGFLIGIG), 142–162 (IPPLLVIFFWYLGVLSVLPQP), 188–208 (TGMIAVGIALVIAIVASIIIA), 225–245 (VWTAIALIVGLPLLVFVVSGF), 264–284 (VVGPEFMSLFLALSFYTASFI), 340–360 (NSSLAIAIGFSDLVAVGGTIL), and 367–387 (IEIVCIWGIVYLSLSILTSLF). One can recognise an ABC transmembrane type-1 domain in the interval 96–388 (ILNTLLVAVT…SLSILTSLFM (293 aa)).

The protein belongs to the binding-protein-dependent transport system permease family. HisMQ subfamily.

The protein resides in the cell inner membrane. Part of a binding-protein-dependent transport system for L-amino acids, affects the uptake as well as efflux of these amino acids. Probably responsible for the translocation of the substrate across the membrane. This is General L-amino acid transport system permease protein AapQ (aapQ) from Rhizobium johnstonii (strain DSM 114642 / LMG 32736 / 3841) (Rhizobium leguminosarum bv. viciae).